The primary structure comprises 142 residues: Large ribosomal subunit protein uL13 (142 aa).

It belongs to the universal ribosomal protein uL13 family. As to quaternary structure, part of the 50S ribosomal subunit.

Its function is as follows. This protein is one of the early assembly proteins of the 50S ribosomal subunit, although it is not seen to bind rRNA by itself. It is important during the early stages of 50S assembly. This is Large ribosomal subunit protein uL13 from Shewanella baltica (strain OS223).